The sequence spans 401 residues: Acetate kinase (401 aa).

Residue asparagine 7 coordinates Mg(2+). Lysine 14 lines the ATP pocket. Residue arginine 91 coordinates substrate. Catalysis depends on aspartate 148, which acts as the Proton donor/acceptor. ATP contacts are provided by residues 208 to 212 (HLGNG), 283 to 285 (DFR), and 332 to 336 (GVGEN). Position 385 (glutamate 385) interacts with Mg(2+).

Belongs to the acetokinase family. Homodimer. Mg(2+) serves as cofactor. Mn(2+) is required as a cofactor.

It localises to the cytoplasm. The catalysed reaction is acetate + ATP = acetyl phosphate + ADP. Its pathway is metabolic intermediate biosynthesis; acetyl-CoA biosynthesis; acetyl-CoA from acetate: step 1/2. Functionally, catalyzes the formation of acetyl phosphate from acetate and ATP. Can also catalyze the reverse reaction. In Caldanaerobacter subterraneus subsp. tengcongensis (strain DSM 15242 / JCM 11007 / NBRC 100824 / MB4) (Thermoanaerobacter tengcongensis), this protein is Acetate kinase.